The primary structure comprises 474 residues: Solute carrier family 49 member A3 (474 aa).

Residues 1 to 20 (MEGESAETEPLIQSSSAADR) form a disordered region. The next 12 membrane-spanning stretches (helical) occupy residues 38-58 (WFIL…WLTF), 69-89 (LCVS…AAVV), 105-126 (CSLI…CGVL), 134-154 (VFAV…LVIF), 175-195 (LASM…PLIV), 201-221 (LFLL…LATL), 258-278 (WILL…STLL), 290-310 (GFAG…AFLL), 326-346 (ICMC…QLPA), 349-369 (VLLV…YPVG), 388-408 (LIFT…QALA), and 428-448 (VPVL…VVFF).

Belongs to the major facilitator superfamily.

Its subcellular location is the membrane. The sequence is that of Solute carrier family 49 member A3 (slc49a3) from Danio rerio (Zebrafish).